A 258-amino-acid polypeptide reads, in one-letter code: Isoprenyl transferase 2 (258 aa).

Over residues 1–18 the composition is skewed to pro residues; the sequence is MNFPPIHPSTPKMTPPDL. The interval 1–21 is disordered; that stretch reads MNFPPIHPSTPKMTPPDLDPQ. D32 is a catalytic residue. D32 is a binding site for Mg(2+). Residues 33–36, W37, R45, H49, and 77–79 contribute to the substrate site; these read GNGR and STE. N80 serves as the catalytic Proton acceptor. Residues W81, R83, R200, and 206–208 each bind substrate; that span reads RLS. Residue E219 coordinates Mg(2+).

Belongs to the UPP synthase family. In terms of assembly, homodimer. It depends on Mg(2+) as a cofactor.

Functionally, catalyzes the condensation of isopentenyl diphosphate (IPP) with allylic pyrophosphates generating different type of terpenoids. The chain is Isoprenyl transferase 2 from Nostoc sp. (strain PCC 7120 / SAG 25.82 / UTEX 2576).